The chain runs to 886 residues: Putative leucine-rich repeat receptor-like serine/threonine-protein kinase At2g14440 (886 aa).

Residues 1–23 form the signal peptide; it reads METRSKLMLLACATFSIISLVKS. Residues 24–528 are Extracellular-facing; sequence QNQQGFISLY…KHQPKSWLVA (505 aa). Asn49, Asn69, Asn232, Asn236, Asn259, Asn292, Asn434, Asn447, Asn458, and Asn471 each carry an N-linked (GlcNAc...) asparagine glycan. LRR repeat units follow at residues 413–436, 437–460, 461–483, and 485–507; these read RIIS…QNLT, MLRE…QNLT, MLRE…LATI, and PLLV…LQDR. The chain crosses the membrane as a helical span at residues 529–549; it reads IVASISCVAVTIIVLVLIFIF. At 550–886 the chain is on the cytoplasmic side; it reads RRRKSSTRKV…TFISDIPSAR (337 aa). One can recognise a Protein kinase domain in the interval 581 to 850; that stretch reads NNFEVVLGKG…NMTRVAHELN (270 aa). ATP is bound by residues 587–595 and Lys608; that span reads LGKGGFGVV. A Phosphotyrosine modification is found at Tyr653. Asp705 acts as the Proton acceptor in catalysis. A Phosphoserine modification is found at Ser739. Residues Thr740 and Thr745 each carry the phosphothreonine modification. Position 753 is a phosphotyrosine (Tyr753). The disordered stretch occupies residues 863-886; that stretch reads SQDQNSSKSSGHTVTFISDIPSAR. The segment covering 865-878 has biased composition (polar residues); sequence DQNSSKSSGHTVTF.

Belongs to the protein kinase superfamily. Ser/Thr protein kinase family.

Its subcellular location is the cell membrane. It carries out the reaction L-seryl-[protein] + ATP = O-phospho-L-seryl-[protein] + ADP + H(+). It catalyses the reaction L-threonyl-[protein] + ATP = O-phospho-L-threonyl-[protein] + ADP + H(+). The sequence is that of Putative leucine-rich repeat receptor-like serine/threonine-protein kinase At2g14440 from Arabidopsis thaliana (Mouse-ear cress).